Consider the following 403-residue polypeptide: Acetate kinase (403 aa).

Residue Asn-7 coordinates Mg(2+). An ATP-binding site is contributed by Lys-14. Arg-90 lines the substrate pocket. Asp-147 serves as the catalytic Proton donor/acceptor. Residues 207–211 (HIGNG), 283–285 (DMR), and 331–335 (GVGEN) each bind ATP. Glu-386 lines the Mg(2+) pocket.

Belongs to the acetokinase family. In terms of assembly, homodimer. The cofactor is Mg(2+). It depends on Mn(2+) as a cofactor.

Its subcellular location is the cytoplasm. It carries out the reaction acetate + ATP = acetyl phosphate + ADP. It participates in metabolic intermediate biosynthesis; acetyl-CoA biosynthesis; acetyl-CoA from acetate: step 1/2. Functionally, catalyzes the formation of acetyl phosphate from acetate and ATP. Can also catalyze the reverse reaction. The polypeptide is Acetate kinase (Thermotoga petrophila (strain ATCC BAA-488 / DSM 13995 / JCM 10881 / RKU-1)).